The sequence spans 497 residues: Cytosol aminopeptidase (497 aa).

Positions 267 and 272 each coordinate Mn(2+). Lys279 is an active-site residue. 3 residues coordinate Mn(2+): Asp290, Asp349, and Glu351. The active site involves Arg353.

This sequence belongs to the peptidase M17 family. Requires Mn(2+) as cofactor.

The protein localises to the cytoplasm. It carries out the reaction Release of an N-terminal amino acid, Xaa-|-Yaa-, in which Xaa is preferably Leu, but may be other amino acids including Pro although not Arg or Lys, and Yaa may be Pro. Amino acid amides and methyl esters are also readily hydrolyzed, but rates on arylamides are exceedingly low.. It catalyses the reaction Release of an N-terminal amino acid, preferentially leucine, but not glutamic or aspartic acids.. Functionally, presumably involved in the processing and regular turnover of intracellular proteins. Catalyzes the removal of unsubstituted N-terminal amino acids from various peptides. The chain is Cytosol aminopeptidase (pepA) from Pseudomonas putida (Arthrobacter siderocapsulatus).